We begin with the raw amino-acid sequence, 315 residues long: Ester hydrolase C11orf54 homolog (315 aa).

Positions 266, 268, and 278 each coordinate Zn(2+).

In terms of assembly, monomer. Zn(2+) serves as cofactor.

The protein resides in the nucleus. The protein localises to the cytoplasm. Functionally, exhibits ester hydrolase activity on the substrate p-nitrophenyl acetate, in vitro. Regulates DNA damage and repair by regulating HIF1A degradation via chaperone-mediated autophagy (CMA). The polypeptide is Ester hydrolase C11orf54 homolog (Mus musculus (Mouse)).